Reading from the N-terminus, the 87-residue chain is Defensin-like protein 81 (87 aa).

Residues 1–27 (MTIKKFLPLLLSSLMVYSLILLPIISG) form the signal peptide. 4 disulfide bridges follow: Cys33–Cys69, Cys37–Cys57, Cys43–Cys67, and Cys47–Cys68.

It belongs to the DEFL family.

The protein localises to the secreted. This is Defensin-like protein 81 from Arabidopsis thaliana (Mouse-ear cress).